A 277-amino-acid chain; its full sequence is Orotidine 5'-phosphate decarboxylase (277 aa).

Substrate contacts are provided by residues Asp40, 62 to 64, 93 to 102, Tyr229, and Arg247; these read KTH and DRKFIDIGNT. Residue Lys95 is the Proton donor of the active site.

It belongs to the OMP decarboxylase family.

The catalysed reaction is orotidine 5'-phosphate + H(+) = UMP + CO2. The protein operates within pyrimidine metabolism; UMP biosynthesis via de novo pathway; UMP from orotate: step 2/2. This is Orotidine 5'-phosphate decarboxylase (pyrG) from Aspergillus awamori (Black koji mold).